The chain runs to 737 residues: MNGDSRAAVVTSPPPTTAPHKERYFDRVDENNPEYLRERNMAPDLRQDFNMMEQKKRVSMILQSPAFCEELESMIQEQFKKGKNPTGLLALQQIADFMTTNVPNVYPAAPQGGMAALNMSLGMVTPVNDLRGSDSIAYDKGEKLLRCKLAAFYRLADLFGWSQLIYNHITTRVNSEQEHFLIVPFGLLYSEVTASSLVKINLQGDIVDRGSTNLGVNQAGFTLHSAIYAARPDVKCVVHIHTPAGAAVSAMKCGLLPISPEALSLGEVAYHDYHGILVDEEEKVLIQKNLGPKSKVLILRNHGLVSVGESVEEAFYYIHNLVVACEIQVRTLASAGGPDNLVLLNPEKYKAKSRSPGSPVGEGTGSPPKWQIGEQEFEALMRMLDNLGYRTGYPYRYPALREKSKKYSDVEVPASVTGYSFASDGDSGTCSPLRHSFQKQQREKTRWLNSGRGDEASEEGQNGSSPKSKTKWTKEDGHRTSTSAVPNLFVPLNTNPKEVQEMRNKIREQNLQDIKTAGPQSQVLCGVVMDRSLVQGELVTASKAIIEKEYQPHVIVSTTGPNPFTTLTDRELEEYRREVERKQKGSEENLDEAREQKEKSPPDQPAVPHPPPSTPIKLEEDLVPEPTTGDDSDAATFKPTLPDLSPDEPSEALGFPMLEKEEEAHRPPSPTEAPTEASPEPAPDPAPVAEEAAPSAVEEGAAADPGSDGSPGKSPSKKKKKFRTPSFLKKSKKKSDS.

Met1 carries the post-translational modification N-acetylmethionine. A disordered region spans residues 1-21 (MNGDSRAAVVTSPPPTTAPHK). The residue at position 12 (Ser12) is a Phosphoserine. Ser59 carries the post-translational modification Phosphoserine; by PKA. Ser64 is modified (phosphoserine). Thr331 bears the Phosphothreonine mark. A phosphoserine mark is found at Ser334, Ser353, Ser355, Ser358, and Ser366. Ser408 is subject to Phosphoserine; by PKA. Disordered regions lie at residues 421–486 (FASD…SAVP) and 576–737 (RREV…KSDS). The residue at position 427 (Ser427) is a Phosphoserine. Thr429 carries the phosphothreonine modification. Ser431 is subject to Phosphoserine. The residue at position 436 (Ser436) is a Phosphoserine; by PKA. Thr445 is modified (phosphothreonine; by ROCK2). Residues Ser464 and Ser465 each carry the phosphoserine modification. The residue at position 480 (Thr480) is a Phosphothreonine; by ROCK2. At Ser481 the chain carries Phosphoserine; by PKA. Positions 576 to 601 (RREVERKQKGSEENLDEAREQKEKSP) are enriched in basic and acidic residues. Phosphoserine occurs at positions 586, 600, and 613. Residues 602-614 (PDQPAVPHPPPST) are compositionally biased toward pro residues. At Thr614 the chain carries Phosphothreonine. Residues Ser678, Ser707, Ser710, and Ser714 each carry the phosphoserine modification. A compositionally biased stretch (low complexity) spans 687 to 714 (PVAEEAAPSAVEEGAAADPGSDGSPGKS). The span at 715-737 (PSKKKKKFRTPSFLKKSKKKSDS) shows a compositional bias: basic residues. Residue Ser716 is modified to Phosphoserine; by PKC. The tract at residues 717-734 (KKKKKFRTPSFLKKSKKK) is interaction with calmodulin. Ser726 is modified (phosphoserine; by PKA and PKC).

This sequence belongs to the aldolase class II family. Adducin subfamily. In terms of assembly, heterodimer of an alpha and a beta subunit or an alpha and a gamma subunit. In terms of tissue distribution, expressed in all tissues. Found in much higher levels in reticulocytes than the beta subunit.

It is found in the cytoplasm. It localises to the cytoskeleton. The protein resides in the cell membrane. Its function is as follows. Membrane-cytoskeleton-associated protein that promotes the assembly of the spectrin-actin network. Binds to calmodulin. This is Alpha-adducin (ADD1) from Homo sapiens (Human).